Reading from the N-terminus, the 123-residue chain is Ribosome-binding factor A (123 aa).

It belongs to the RbfA family. In terms of assembly, monomer. Binds 30S ribosomal subunits, but not 50S ribosomal subunits or 70S ribosomes.

Its subcellular location is the cytoplasm. Functionally, one of several proteins that assist in the late maturation steps of the functional core of the 30S ribosomal subunit. Associates with free 30S ribosomal subunits (but not with 30S subunits that are part of 70S ribosomes or polysomes). Required for efficient processing of 16S rRNA. May interact with the 5'-terminal helix region of 16S rRNA. The protein is Ribosome-binding factor A of Neisseria meningitidis serogroup A / serotype 4A (strain DSM 15465 / Z2491).